Reading from the N-terminus, the 136-residue chain is MRSGNSGSCNHFLVFLRKVVTCHNAAIVRKTTKYNSLKHKTPPLPLALALADALSPQNFFHITSPASLSYSWRRADPGRKGRTQPLPTQGSARRFLHTPQGGVEPCRVIHIITSYMKSISYHIGIHSTKEEKNCNH.

The segment at 74-97 (RADPGRKGRTQPLPTQGSARRFLH) is disordered.

This is an uncharacterized protein from Saccharomyces cerevisiae (strain ATCC 204508 / S288c) (Baker's yeast).